The primary structure comprises 1006 residues: Probable beta-galactosidase A (1006 aa).

The signal sequence occupies residues 1–18; the sequence is MKLLSVCAIALLAAQAAG. Residues tyrosine 96, asparagine 140, alanine 141, and glutamate 142 each coordinate substrate. Asparagine 156 carries an N-linked (GlcNAc...) asparagine glycan. Asparagine 199 is a substrate binding site. Glutamate 200 serves as the catalytic Proton donor. The cysteines at positions 205 and 206 are disulfide-linked. A substrate-binding site is contributed by tyrosine 260. A disulfide bridge links cysteine 266 with cysteine 315. The active-site Nucleophile is glutamate 298. Tyrosine 364 lines the substrate pocket. Residues asparagine 373, asparagine 402, asparagine 422, asparagine 622, asparagine 760, asparagine 777, and asparagine 914 are each glycosylated (N-linked (GlcNAc...) asparagine).

The protein belongs to the glycosyl hydrolase 35 family.

The protein resides in the secreted. It carries out the reaction Hydrolysis of terminal non-reducing beta-D-galactose residues in beta-D-galactosides.. Cleaves beta-linked terminal galactosyl residues from gangliosides, glycoproteins, and glycosaminoglycans. The sequence is that of Probable beta-galactosidase A (lacA) from Aspergillus fumigatus (strain ATCC MYA-4609 / CBS 101355 / FGSC A1100 / Af293) (Neosartorya fumigata).